Reading from the N-terminus, the 185-residue chain is Ribosome-recycling factor (185 aa).

Belongs to the RRF family.

It is found in the cytoplasm. Its function is as follows. Responsible for the release of ribosomes from messenger RNA at the termination of protein biosynthesis. May increase the efficiency of translation by recycling ribosomes from one round of translation to another. The sequence is that of Ribosome-recycling factor from Ehrlichia ruminantium (strain Welgevonden).